Here is a 388-residue protein sequence, read N- to C-terminus: tRNA (guanine-N(7)-)-methyltransferase non-catalytic subunit (388 aa).

4 WD repeats span residues 58-102 (VEKR…KGDI), 112-151 (VVPKAPTAIVFDKEDAYVVVGDRAGDVHRFSVLNGSAIEM), 153-194 (GAIS…DSFF), and 196-234 (GHTEYVKTLAVQDNDSLWSSGGDKNLYNWSIAKCSAPRR). Residues 365-388 (EKKKRRLNEDINGDDGEGPGPSNS) are disordered.

It belongs to the WD repeat TRM82 family. In terms of assembly, forms a heterodimer with the catalytic subunit.

Its subcellular location is the nucleus. The protein operates within tRNA modification; N(7)-methylguanine-tRNA biosynthesis. Required for the formation of N(7)-methylguanine at position 46 (m7G46) in tRNA. In the complex, it is required to stabilize and induce conformational changes of the catalytic subunit. The sequence is that of tRNA (guanine-N(7)-)-methyltransferase non-catalytic subunit from Caenorhabditis elegans.